The sequence spans 246 residues: 4-aminobenzoate synthase (246 aa).

The Fe(2+) site is built by Glu-88, His-95, Glu-149, His-181, Asp-185, and His-188.

This sequence belongs to the CADD family. As to quaternary structure, homodimer. It depends on Fe(2+) as a cofactor. Mn(2+) serves as cofactor.

Its function is as follows. Involved in de novo para-aminobenzoate (PABA) biosynthesis. Acts as a self-sacrificing or 'suicide' enzyme that utilizes its own active site tyrosine residue(s) as the substrate for PABA synthesis. The side chain of the tyrosine residue is released from the protein backbone via cleavage of the C(alpha)-C(beta) bond, leaving a glycine in place of the original tyrosine residue. Reaction requires O(2) and a reduced dimetal cofactor. In Nitrosomonas europaea (strain ATCC 19718 / CIP 103999 / KCTC 2705 / NBRC 14298), this protein is 4-aminobenzoate synthase.